The primary structure comprises 366 residues: Caffeic acid 3-O-methyltransferase (366 aa).

Residue 131–137 coordinates substrate; it reads MNQDKIL. The interval 163 to 181 is substrate binding; that stretch reads AFEYHGTDPRFNKIFNRGM. Gly209, Asp232, Asp252, Met253, and Lys266 together coordinate S-adenosyl-L-methionine. His270 (proton acceptor) is an active-site residue.

This sequence belongs to the class I-like SAM-binding methyltransferase superfamily. Cation-independent O-methyltransferase family. COMT subfamily. In terms of assembly, homodimer.

It carries out the reaction (E)-caffeate + S-adenosyl-L-methionine = (E)-ferulate + S-adenosyl-L-homocysteine + H(+). The protein operates within aromatic compound metabolism; phenylpropanoid biosynthesis. Catalyzes the conversion of caffeic acid to ferulic acid and of 5-hydroxyferulic acid to sinapic acid. The resulting products may subsequently be converted to the corresponding alcohols that are incorporated into lignins. The sequence is that of Caffeic acid 3-O-methyltransferase (OMT) from Eucalyptus gunnii (Cider gum).